We begin with the raw amino-acid sequence, 331 residues long: tRNA U34 carboxymethyltransferase (331 aa).

Carboxy-S-adenosyl-L-methionine is bound by residues Lys91, Trp105, Lys110, Gly130, 152–154 (DPS), 181–182 (IE), Met196, Tyr200, and Arg315.

It belongs to the class I-like SAM-binding methyltransferase superfamily. CmoB family. In terms of assembly, homotetramer.

The catalysed reaction is carboxy-S-adenosyl-L-methionine + 5-hydroxyuridine(34) in tRNA = 5-carboxymethoxyuridine(34) in tRNA + S-adenosyl-L-homocysteine + H(+). Catalyzes carboxymethyl transfer from carboxy-S-adenosyl-L-methionine (Cx-SAM) to 5-hydroxyuridine (ho5U) to form 5-carboxymethoxyuridine (cmo5U) at position 34 in tRNAs. The polypeptide is tRNA U34 carboxymethyltransferase (Shewanella baltica (strain OS185)).